Here is a 359-residue protein sequence, read N- to C-terminus: Phosphoserine aminotransferase (359 aa).

L-glutamate is bound at residue Arg41. Pyridoxal 5'-phosphate contacts are provided by residues 75–76, Trp101, Thr151, Asp171, and Gln194; that span reads AS. At Lys195 the chain carries N6-(pyridoxal phosphate)lysine. 236 to 237 provides a ligand contact to pyridoxal 5'-phosphate; that stretch reads NT.

Belongs to the class-V pyridoxal-phosphate-dependent aminotransferase family. SerC subfamily. In terms of assembly, homodimer. Requires pyridoxal 5'-phosphate as cofactor.

It localises to the cytoplasm. The enzyme catalyses O-phospho-L-serine + 2-oxoglutarate = 3-phosphooxypyruvate + L-glutamate. The catalysed reaction is 4-(phosphooxy)-L-threonine + 2-oxoglutarate = (R)-3-hydroxy-2-oxo-4-phosphooxybutanoate + L-glutamate. Its pathway is amino-acid biosynthesis; L-serine biosynthesis; L-serine from 3-phospho-D-glycerate: step 2/3. It functions in the pathway cofactor biosynthesis; pyridoxine 5'-phosphate biosynthesis; pyridoxine 5'-phosphate from D-erythrose 4-phosphate: step 3/5. Catalyzes the reversible conversion of 3-phosphohydroxypyruvate to phosphoserine and of 3-hydroxy-2-oxo-4-phosphonooxybutanoate to phosphohydroxythreonine. In Thiobacillus denitrificans (strain ATCC 25259 / T1), this protein is Phosphoserine aminotransferase.